The sequence spans 759 residues: Subtilisin-like serine-protease S (759 aa).

Residues 1-22 (MGSAKILSFTLLLFVGYTLVHG) form the signal peptide. Residues 28–105 (YIVYMGDRSH…SVFESKMNKL (78 aa)) enclose the Inhibitor I9 domain. The Peptidase S8 domain maps to 110-613 (SWDFLGLDTV…SGHVNPVASL (504 aa)). The Charge relay system role is filled by D139. N170 is a glycosylation site (N-linked (GlcNAc...) asparagine). H215 acts as the Charge relay system in catalysis. N-linked (GlcNAc...) asparagine glycosylation is found at N230 and N388. Residues 390–462 (SFCKEHTLDP…MIGQDAVEEL (73 aa)) enclose the PA domain. The Charge relay system role is filled by S545. 3 N-linked (GlcNAc...) asparagine glycosylation sites follow: N593, N642, and N671.

Belongs to the peptidase S8 family.

Its subcellular location is the secreted. The protein localises to the extracellular space. It localises to the apoplast. In terms of biological role, required for arbuscular mycorrhiza (AM) development during AM symbiosis with AM fungi (e.g. Glomeromycota intraradices). The protein is Subtilisin-like serine-protease S of Lotus japonicus (Lotus corniculatus var. japonicus).